Reading from the N-terminus, the 205-residue chain is Probable GTP-binding protein EngB (205 aa).

Positions 22–195 constitute an EngB-type G domain; the sequence is NLPEVALVGR…LDLLDYFWNG (174 aa). GTP contacts are provided by residues 30–37, 57–61, 75–78, 142–145, and 174–176; these read GRSNVGKS, GKTQT, DLPG, TKAD, and FSA. The Mg(2+) site is built by S37 and T59.

This sequence belongs to the TRAFAC class TrmE-Era-EngA-EngB-Septin-like GTPase superfamily. EngB GTPase family. Requires Mg(2+) as cofactor.

Its function is as follows. Necessary for normal cell division and for the maintenance of normal septation. This Heliobacterium modesticaldum (strain ATCC 51547 / Ice1) protein is Probable GTP-binding protein EngB.